We begin with the raw amino-acid sequence, 239 residues long: Octanoyltransferase (239 aa).

In terms of domain architecture, BPL/LPL catalytic spans 48-236 (EGGDELVWLV…AFETVFGETV (189 aa)). Substrate is bound by residues 87–94 (RGGEYTYH), 167–169 (ALG), and 180–182 (GLS). Cys198 serves as the catalytic Acyl-thioester intermediate.

It belongs to the LipB family.

It is found in the cytoplasm. The enzyme catalyses octanoyl-[ACP] + L-lysyl-[protein] = N(6)-octanoyl-L-lysyl-[protein] + holo-[ACP] + H(+). It participates in protein modification; protein lipoylation via endogenous pathway; protein N(6)-(lipoyl)lysine from octanoyl-[acyl-carrier-protein]: step 1/2. Its function is as follows. Catalyzes the transfer of endogenously produced octanoic acid from octanoyl-acyl-carrier-protein onto the lipoyl domains of lipoate-dependent enzymes. Lipoyl-ACP can also act as a substrate although octanoyl-ACP is likely to be the physiological substrate. In Rhizobium etli (strain CIAT 652), this protein is Octanoyltransferase.